The following is a 186-amino-acid chain: Elongation factor P (186 aa).

It belongs to the elongation factor P family.

The protein localises to the cytoplasm. Its pathway is protein biosynthesis; polypeptide chain elongation. Involved in peptide bond synthesis. Stimulates efficient translation and peptide-bond synthesis on native or reconstituted 70S ribosomes in vitro. Probably functions indirectly by altering the affinity of the ribosome for aminoacyl-tRNA, thus increasing their reactivity as acceptors for peptidyl transferase. In Shewanella halifaxensis (strain HAW-EB4), this protein is Elongation factor P.